The chain runs to 31 residues: Cytochrome b6-f complex subunit 6 (31 aa).

A helical transmembrane segment spans residues 4–24; the sequence is LLSYFGFLFAILTLTSVLFIG.

Belongs to the PetL family. As to quaternary structure, the 4 large subunits of the cytochrome b6-f complex are cytochrome b6, subunit IV (17 kDa polypeptide, PetD), cytochrome f and the Rieske protein, while the 4 small subunits are PetG, PetL, PetM and PetN. The complex functions as a dimer.

The protein localises to the plastid. It localises to the chloroplast thylakoid membrane. Functionally, component of the cytochrome b6-f complex, which mediates electron transfer between photosystem II (PSII) and photosystem I (PSI), cyclic electron flow around PSI, and state transitions. PetL is important for photoautotrophic growth as well as for electron transfer efficiency and stability of the cytochrome b6-f complex. The sequence is that of Cytochrome b6-f complex subunit 6 from Angiopteris evecta (Mule's foot fern).